A 691-amino-acid polypeptide reads, in one-letter code: Dynamin-1-like protein (691 aa).

The region spanning 22 to 301 (IIQLPQIAVV…LMHHIRDCLP (280 aa)) is the Dynamin-type G domain. The tract at residues 32-39 (GTQSSGKS) is G1 motif. 32-40 (GTQSSGKSS) contacts GTP. Positions 58 to 60 (VTR) are G2 motif. The segment at 145–148 (DLPG) is G3 motif. A G4 motif region spans residues 214–217 (TKLD). Residues 214-220 (TKLDLMD) and 245-248 (NRSQ) contribute to the GTP site. A G5 motif region spans residues 244–247 (VNRS). The tract at residues 343–488 (YCNTIEGTAK…NEMVHNLVAI (146 aa)) is middle domain. Composition is skewed to basic and acidic residues over residues 522–531 (LPTSVPRDKM) and 551–563 (KKGDEGQGEEKTK). Positions 522-573 (LPTSVPRDKMAGGAQAEQEGGTGTWRGMLKKGDEGQGEEKTKLQSSIPASPQ) are disordered. In terms of domain architecture, GED spans 599–690 (CEVIERLIKS…VIAEIRETHL (92 aa)). The interval 609 to 623 (YFLIVRKNIQDSVPK) is important for homodimerization.

The protein belongs to the TRAFAC class dynamin-like GTPase superfamily. Dynamin/Fzo/YdjA family. Homotetramer; dimerizes through the N-terminal GTP-middle region of one molecule binding to the GED domain of another DNM1L molecule. Oligomerizes in a GTP-dependent manner to form membrane-associated tubules with a spiral pattern.

The protein localises to the cytoplasm. Its subcellular location is the cytosol. The protein resides in the golgi apparatus. It is found in the endomembrane system. It localises to the mitochondrion outer membrane. The protein localises to the peroxisome. Its subcellular location is the membrane. The protein resides in the clathrin-coated pit. It is found in the cytoplasmic vesicle. It localises to the secretory vesicle. The protein localises to the synaptic vesicle membrane. The enzyme catalyses GTP + H2O = GDP + phosphate + H(+). Functionally, functions in mitochondrial and peroxisomal division. Mediates membrane fission through oligomerization into membrane-associated tubular structures that wrap around the scission site to constrict and sever the mitochondrial membrane through a GTP hydrolysis-dependent mechanism. The specific recruitment at scission sites is mediated by membrane receptors like MFF, MIEF1 and MIEF2 for mitochondrial membranes. While the recruitment by the membrane receptors is GTP-dependent, the following hydrolysis of GTP induces the dissociation from the receptors and allows DNM1L filaments to curl into closed rings that are probably sufficient to sever a double membrane. May play a role in the circadian control of mitochondrial ATP production. The chain is Dynamin-1-like protein from Danio rerio (Zebrafish).